Reading from the N-terminus, the 697-residue chain is uncharacterized protein (697 aa).

5 helical membrane passes run 45–65 (LCAVTAIISVVVPFAAGLALL), 86–106 (TVAAGMIAFLIAGLGGFMGVV), 128–148 (VVVSSLIGGFVFGAAMVGMLA), 198–218 (VLLGYFNIGIMIVSLIGWWAL), and 280–300 (HLAIIGANGSGKTTLMLILAG). ABC transporter domains lie at 251–473 (VRLD…QPQH) and 477–696 (LELV…AGGM). ATP contacts are provided by residues 285–292 (GANGSGKT) and 514–521 (GGNGSGKS). Residues 522-542 (TLAWIMAGLTIPTTGACLLDG) traverse the membrane as a helical segment.

This sequence belongs to the ABC transporter superfamily.

It is found in the cell membrane. This is an uncharacterized protein from Mycobacterium tuberculosis (strain CDC 1551 / Oshkosh).